The sequence spans 400 residues: Large envelope protein (400 aa).

At Met-1 the chain carries N-acetylmethionine. Gly-2 carries the N-myristoyl glycine; by host lipid modification. The tract at residues 2-119 (GAPLSTTRRG…PPLRDTHPQA (118 aa)) is pre-S1. The segment at 2–174 (GAPLSTTRRG…FSKTGGPAMN (173 aa)) is pre-S. The Virion surface; in external conformation segment spans residues 2 to 181 (GAPLSTTRRG…AMNMDNITSG (180 aa)). The Intravirion; in internal conformation portion of the chain corresponds to 2–253 (GAPLSTTRRG…PGYRWMCLRR (252 aa)). Residue Pro-4 is glycosylated (N-linked (GlcNAc...) asparagine). The disordered stretch occupies residues 84 to 117 (VLTTLPADPPPASTNRRSGRKPTPVSPPLRDTHP). The segment at 120–174 (MQWNSTQFHQALLDPRVRALYFPAGGSSSGTQNPAPTIASLTSSIFSKTGGPAMN) is pre-S2. A helical transmembrane segment spans residues 182-202 (LLGPLLVLQAVCFLLTKILTI). Over 203 to 253 (PQSLDSWWTSLNFLGGLPGCPGQNSQSPTSNHLPTSCPPTCPGYRWMCLRR) the chain is Intravirion; in external conformation. Residues 254–274 (FIIFLFILLLCLIFLLVLLDY) traverse the membrane as a helical segment. Topologically, residues 275 to 348 (QGMLPVCPLL…WASARFSWLS (74 aa)) are virion surface. Residue Asn-320 is glycosylated (N-linked (GlcNAc...) asparagine; by host). A helical transmembrane segment spans residues 349 to 369 (LLVQFVQWCVGLSPTVWLLVI). Over 370–375 (WMIWYW) the chain is Intravirion. The chain crosses the membrane as a helical span at residues 376-398 (GPNLCSILSPFIPLLPIFCYLWV). Topologically, residues 399–400 (SI) are virion surface.

It belongs to the orthohepadnavirus major surface antigen family. In its internal form (Li-HBsAg), interacts with the capsid protein and with the isoform S. Interacts with host chaperone CANX. In terms of assembly, associates with host chaperone CANX through its pre-S2 N glycan; this association may be essential for isoform M proper secretion. As to quaternary structure, interacts with isoform L. Interacts with the antigens of satellite virus HDV (HDVAgs); this interaction is required for encapsidation of HDV genomic RNA. Post-translationally, isoform M is N-terminally acetylated by host at a ratio of 90%, and N-glycosylated by host at the pre-S2 region. In terms of processing, myristoylated.

The protein localises to the virion membrane. In terms of biological role, the large envelope protein exists in two topological conformations, one which is termed 'external' or Le-HBsAg and the other 'internal' or Li-HBsAg. In its external conformation the protein attaches the virus to cell receptors and thereby initiating infection. This interaction determines the species specificity and liver tropism. This attachment induces virion internalization predominantly through caveolin-mediated endocytosis. The large envelope protein also assures fusion between virion membrane and endosomal membrane. In its internal conformation the protein plays a role in virion morphogenesis and mediates the contact with the nucleocapsid like a matrix protein. Its function is as follows. The middle envelope protein plays an important role in the budding of the virion. It is involved in the induction of budding in a nucleocapsid independent way. In this process the majority of envelope proteins bud to form subviral lipoprotein particles of 22 nm of diameter that do not contain a nucleocapsid. The polypeptide is Large envelope protein (Hepatitis B virus genotype F2 (isolate Brazil/w4B) (HBV-F)).